A 443-amino-acid polypeptide reads, in one-letter code: Thymidine phosphorylase (443 aa).

The protein belongs to the thymidine/pyrimidine-nucleoside phosphorylase family. In terms of assembly, homodimer.

It catalyses the reaction thymidine + phosphate = 2-deoxy-alpha-D-ribose 1-phosphate + thymine. The protein operates within pyrimidine metabolism; dTMP biosynthesis via salvage pathway; dTMP from thymine: step 1/2. In terms of biological role, the enzymes which catalyze the reversible phosphorolysis of pyrimidine nucleosides are involved in the degradation of these compounds and in their utilization as carbon and energy sources, or in the rescue of pyrimidine bases for nucleotide synthesis. The polypeptide is Thymidine phosphorylase (Photobacterium profundum (strain SS9)).